Consider the following 149-residue polypeptide: Large ribosomal subunit protein uL13 (149 aa).

It belongs to the universal ribosomal protein uL13 family. In terms of assembly, part of the 50S ribosomal subunit.

Its function is as follows. This protein is one of the early assembly proteins of the 50S ribosomal subunit, although it is not seen to bind rRNA by itself. It is important during the early stages of 50S assembly. The protein is Large ribosomal subunit protein uL13 of Chlorobium phaeovibrioides (strain DSM 265 / 1930) (Prosthecochloris vibrioformis (strain DSM 265)).